The primary structure comprises 574 residues: Bifunctional NADP phosphatase/NAD kinase (574 aa).

The interval methionine 1 to tryptophan 297 is NADP phosphatase. 5 residues coordinate Mg(2+): glutamate 69, aspartate 87, isoleucine 89, aspartate 90, and aspartate 243. Positions valine 302–lysine 574 are NAD kinase. Aspartate 362 serves as the catalytic Proton acceptor. Residues aspartate 362–glycine 363, arginine 367, asparagine 436–glutamate 437, lysine 447, arginine 464, aspartate 466, and threonine 477–serine 482 contribute to the NAD(+) site.

It in the N-terminal section; belongs to the inositol monophosphatase superfamily. The protein in the C-terminal section; belongs to the NAD kinase family. Homotetramer. It depends on Mg(2+) as a cofactor.

The protein resides in the cytoplasm. The catalysed reaction is NAD(+) + ATP = ADP + NADP(+) + H(+). It catalyses the reaction NADP(+) + H2O = phosphate + NAD(+). The enzyme catalyses UTP + NAD(+) = UDP + NADP(+) + H(+). It carries out the reaction 5-methyl-UTP + NAD(+) = 5-methyl-UDP + NADP(+) + H(+). The catalysed reaction is CTP + NAD(+) = CDP + NADP(+) + H(+). It catalyses the reaction GTP + NAD(+) = GDP + NADP(+) + H(+). The enzyme catalyses dATP + NAD(+) = dADP + NADP(+) + H(+). It carries out the reaction NADPH + H2O = phosphate + NADH. The catalysed reaction is adenosine 2'-phosphate + H2O = adenosine + phosphate. It catalyses the reaction beta-D-fructose 1,6-bisphosphate + H2O = beta-D-fructose 6-phosphate + phosphate. Phosphatase activity is slightly inhibited by ADP, NADH and ATP, and moderately inhibited by NAD and 5'-AMP. Kinase activity is slightly inhibited by ADP and NADP. Its function is as follows. Involved in the regulation of the intracellular balance between NAD(H) and NADP(H), and is a key enzyme in the biosynthesis of NADP. Catalyzes the phosphorylation and dephosphorylation of NAD and NADP, respectively. Although it shows conflicting dual activities and is able to supply NADP, it seems that its physiological role is to prevent excess accumulation of NADP. Kinase can use ATP and other nucleoside triphosphates (UTP, TTP, CTP, GTP) as well as inorganic polyphosphate (poly(P)) as phosphoryl donors, however poly(P) is not considered to be the physiological phosphoryl donor. NAD is the preferred substrate for the kinase, but NADH can also be used as phosphoryl acceptor. Phosphatase can use NADP or NADPH as phosphoryl donor, but NADP is the preferred substrate. Phosphatase also has an activity toward the terminal phosphate group at C-2 of adenosine in 2'-AMP and toward the phosphate group at C-1 of fructose 1,6-bisphosphate, but not toward inositol 1-phosphate. The sequence is that of Bifunctional NADP phosphatase/NAD kinase from Methanocaldococcus jannaschii (strain ATCC 43067 / DSM 2661 / JAL-1 / JCM 10045 / NBRC 100440) (Methanococcus jannaschii).